The sequence spans 554 residues: Propanediol dehydratase large subunit (554 aa).

It belongs to the diol/glycerol dehydratase large subunit family. In terms of assembly, the propanediol dehydratase enzyme is a heterotrimeric complex composed of a large (PduC), a medium (PduD) and a small (PduE) subunit. Adenosylcob(III)alamin serves as cofactor.

It is found in the bacterial microcompartment. The catalysed reaction is propane-1,2-diol = propanal + H2O. Its pathway is polyol metabolism; 1,2-propanediol degradation. In terms of biological role, part of the PduCDE complex that catalyzes the dehydration of 1,2-propanediol (1,2-PD) to propionaldehyde. This subunit is directly targeted to the bacterial microcompartment (BMC). Functionally, expression of a cosmid containing the full 21-gene pdu operon in E.coli allows E.coli to grow on 1,2-propanediol (1,2-PD) with the appearance of BMCs in its cytoplasm. Its function is as follows. The 1,2-PD-specific bacterial microcompartment (BMC) concentrates low levels of 1,2-PD catabolic enzymes, concentrates volatile reaction intermediates thus enhancing pathway flux and keeps the level of toxic, mutagenic propionaldehyde low. The polypeptide is Propanediol dehydratase large subunit (Citrobacter freundii).